We begin with the raw amino-acid sequence, 481 residues long: Xylulose kinase (481 aa).

Residue 81 to 82 (QH) participates in substrate binding. D239 serves as the catalytic Proton acceptor.

The protein belongs to the FGGY kinase family.

It carries out the reaction D-xylulose + ATP = D-xylulose 5-phosphate + ADP + H(+). Functionally, catalyzes the phosphorylation of D-xylulose to D-xylulose 5-phosphate. This Streptomyces coelicolor (strain ATCC BAA-471 / A3(2) / M145) protein is Xylulose kinase.